Consider the following 280-residue polypeptide: UBX domain-containing protein 10 (280 aa).

The disordered stretch occupies residues 41–94 (SAKGRTRPSLQKSQGVEVCAHHIPSPPPAIPYELPSSQKPGACAPKSPNQGASD). Ser87 carries the post-translational modification Phosphoserine. One can recognise a UBX domain in the interval 194–271 (DQEPRLLLAV…RIPHKSVLGI (78 aa)).

This sequence belongs to the UBXN10 family. As to quaternary structure, interacts with CLUAP1; the interaction is direct and mediates interaction with the intraflagellar transport complex B (IFT-B). Interacts with VCP; the interaction is direct.

The protein localises to the cell projection. Its subcellular location is the cilium. Functionally, VCP/p97-binding protein required for ciliogenesis. Acts as a tethering factor that facilitates recruitment of VCP/p97 to the intraflagellar transport complex B (IFT-B) in cilia. UBX domain-containing proteins act as tethering factors for VCP/p97 and may specify substrate specificity of VCP/p97. This Homo sapiens (Human) protein is UBX domain-containing protein 10.